Reading from the N-terminus, the 349-residue chain is tRNA pseudouridine synthase D (349 aa).

Residue F27 coordinates substrate. D80 serves as the catalytic Nucleophile. N129 is a binding site for substrate. The TRUD domain occupies 155–303 (GVPNYFGAQR…VEAARRAMLL (149 aa)). Position 329 (F329) interacts with substrate.

It belongs to the pseudouridine synthase TruD family.

It carries out the reaction uridine(13) in tRNA = pseudouridine(13) in tRNA. Responsible for synthesis of pseudouridine from uracil-13 in transfer RNAs. The sequence is that of tRNA pseudouridine synthase D from Escherichia coli (strain K12 / MC4100 / BW2952).